Reading from the N-terminus, the 276-residue chain is Formamidopyrimidine-DNA glycosylase (276 aa).

Proline 2 acts as the Schiff-base intermediate with DNA in catalysis. Glutamate 3 serves as the catalytic Proton donor. Catalysis depends on lysine 60, which acts as the Proton donor; for beta-elimination activity. Positions 93 and 112 each coordinate DNA. The FPG-type zinc finger occupies 240–274 (NVYGKKGEPCVTCGTILEKTVVGGRGTHYCPICQP). The active-site Proton donor; for delta-elimination activity is the arginine 264.

This sequence belongs to the FPG family. As to quaternary structure, monomer. Zn(2+) is required as a cofactor.

It carries out the reaction Hydrolysis of DNA containing ring-opened 7-methylguanine residues, releasing 2,6-diamino-4-hydroxy-5-(N-methyl)formamidopyrimidine.. The enzyme catalyses 2'-deoxyribonucleotide-(2'-deoxyribose 5'-phosphate)-2'-deoxyribonucleotide-DNA = a 3'-end 2'-deoxyribonucleotide-(2,3-dehydro-2,3-deoxyribose 5'-phosphate)-DNA + a 5'-end 5'-phospho-2'-deoxyribonucleoside-DNA + H(+). In terms of biological role, involved in base excision repair of DNA damaged by oxidation or by mutagenic agents. Acts as a DNA glycosylase that recognizes and removes damaged bases. Has a preference for oxidized purines, such as 7,8-dihydro-8-oxoguanine (8-oxoG). Has AP (apurinic/apyrimidinic) lyase activity and introduces nicks in the DNA strand. Cleaves the DNA backbone by beta-delta elimination to generate a single-strand break at the site of the removed base with both 3'- and 5'-phosphates. This is Formamidopyrimidine-DNA glycosylase from Bacillus cereus (strain ATCC 10987 / NRS 248).